Reading from the N-terminus, the 688-residue chain is Glycine--tRNA ligase beta subunit (688 aa).

It belongs to the class-II aminoacyl-tRNA synthetase family. Tetramer of two alpha and two beta subunits.

The protein resides in the cytoplasm. The catalysed reaction is tRNA(Gly) + glycine + ATP = glycyl-tRNA(Gly) + AMP + diphosphate. This Geotalea uraniireducens (strain Rf4) (Geobacter uraniireducens) protein is Glycine--tRNA ligase beta subunit.